Consider the following 126-residue polypeptide: Probable 4-amino-4-deoxy-L-arabinose-phosphoundecaprenol flippase subunit ArnF (126 aa).

The chain crosses the membrane as a helical span at residues 1-21; sequence MGFFWALLSVGLVSAAQLLLR. At 22-47 the chain is on the periplasmic side; sequence SAMVALPPLTDIVAFLQHLLHFQPGT. Residues 48–68 form a helical membrane-spanning segment; it reads FGLFFGLLGYLLSMVCWYFAL. Over 69–76 the chain is Cytoplasmic; the sequence is HRLPLSKA. Residues 77–97 form a helical membrane-spanning segment; sequence YALLSLSYILVWAAAIWLPGW. Residues 98 to 100 lie on the Periplasmic side of the membrane; that stretch reads HEP. A helical membrane pass occupies residues 101–121; it reads FYWQSLLGVAIIVAGVLTIFW. The Cytoplasmic segment spans residues 122-126; it reads PVKRR.

Belongs to the ArnF family. As to quaternary structure, heterodimer of ArnE and ArnF.

The protein resides in the cell inner membrane. Its pathway is bacterial outer membrane biogenesis; lipopolysaccharide biosynthesis. Translocates 4-amino-4-deoxy-L-arabinose-phosphoundecaprenol (alpha-L-Ara4N-phosphoundecaprenol) from the cytoplasmic to the periplasmic side of the inner membrane. The protein is Probable 4-amino-4-deoxy-L-arabinose-phosphoundecaprenol flippase subunit ArnF of Klebsiella pneumoniae subsp. pneumoniae (strain ATCC 700721 / MGH 78578).